The primary structure comprises 419 residues: Ribosome biogenesis protein NOP53 (419 aa).

2 disordered regions span residues 1–21 and 233–283; these read MGIK…KNKR and KAFE…KIRQ. A compositionally biased stretch (basic and acidic residues) spans 233 to 261; it reads KAFEDKGLVSDQDVNHSIDSDDQSEHEQA. Residues serine 242, serine 249, serine 252, and serine 256 each carry the phosphoserine modification. Residues 269-283 are compositionally biased toward basic residues; it reads KNKRKTRSQRNKIRQ.

Belongs to the NOP53 family.

The protein localises to the nucleus. Its subcellular location is the nucleolus. It localises to the nucleoplasm. May play a role in ribosome biogenesis. This chain is Ribosome biogenesis protein NOP53, found in Schizosaccharomyces pombe (strain 972 / ATCC 24843) (Fission yeast).